Reading from the N-terminus, the 450-residue chain is Endosomal transmembrane epsin interactor 1 (450 aa).

A signal peptide spans 1–29 (MILLVNLFVLLSVVCVLLNLAGFILGCQG). The Lumenal portion of the chain corresponds to 30-85 (AQFVSSVPRCDLVDLGEGKICFCCEEFQPAKCTDKENALKLFPVQPCSAVHLLLKK). Residues 86–106 (VLFALCALNALTTTVCLVAAA) traverse the membrane as a helical segment. Residues 107 to 450 (LRYLQIFATR…LIGVIRETVL (344 aa)) are Cytoplasmic-facing. The mediates interaction with EPN1 stretch occupies residues 107 to 450 (LRYLQIFATR…LIGVIRETVL (344 aa)). 2 consecutive short sequence motifs (PPxY; mediates interaction with ITCH) follow at residues 148 to 151 (PPSY) and 194 to 197 (PPPY). Residues 235 to 284 (DGDIPNIPAEENASTSTPSSTLVRPIRSRRALPPLRTRSKSDPVLHPSEE) form a disordered region. Polar residues predominate over residues 246-256 (NASTSTPSSTL). Basic and acidic residues predominate over residues 273-284 (SKSDPVLHPSEE). A Glycyl lysine isopeptide (Lys-Gly) (interchain with G-Cter in ubiquitin) cross-link involves residue Lys-274. Ser-275 carries the phosphoserine modification. Glycyl lysine isopeptide (Lys-Gly) (interchain with G-Cter in ubiquitin) cross-links involve residues Lys-329 and Lys-365.

It belongs to the ENTREP family. As to quaternary structure, interacts with ITCH; enhances the ubiquitination of CXCR4 by ITCH and the subsequent endocytosis and desensitization of the receptor. Interacts with EPN1. Monoubiquitinated at Lys-274, Lys-329 and Lys-365 by ITCH. In terms of tissue distribution, prominently expressed in muscle.

The protein resides in the early endosome membrane. The protein localises to the late endosome membrane. It localises to the recycling endosome membrane. Its subcellular location is the cell membrane. Its function is as follows. Functions as an activator of the E3 ubiquitin protein ligase ITCH in the ubiquitination of the CXCL12-activated CXCR4 receptor. Thereby, triggers CXCR4 endocytosis and desensitization, negatively regulating the CXCL12/CXCR4 signaling pathway. This chain is Endosomal transmembrane epsin interactor 1, found in Homo sapiens (Human).